The sequence spans 263 residues: Endonuclease 8 (263 aa).

Pro2 serves as the catalytic Schiff-base intermediate with DNA. Glu3 (proton donor) is an active-site residue. Lys53 (proton donor; for beta-elimination activity) is an active-site residue. Positions 70, 125, and 169 each coordinate DNA. An FPG-type zinc finger spans residues 229–263 (KVFHRDGELCERCGGIIEKTTLSSRPFYWCPGCQH). The active-site Proton donor; for delta-elimination activity is Arg253.

Belongs to the FPG family. Zn(2+) is required as a cofactor.

It carries out the reaction 2'-deoxyribonucleotide-(2'-deoxyribose 5'-phosphate)-2'-deoxyribonucleotide-DNA = a 3'-end 2'-deoxyribonucleotide-(2,3-dehydro-2,3-deoxyribose 5'-phosphate)-DNA + a 5'-end 5'-phospho-2'-deoxyribonucleoside-DNA + H(+). Involved in base excision repair of DNA damaged by oxidation or by mutagenic agents. Acts as a DNA glycosylase that recognizes and removes damaged bases. Has a preference for oxidized pyrimidines, such as thymine glycol, 5,6-dihydrouracil and 5,6-dihydrothymine. Has AP (apurinic/apyrimidinic) lyase activity and introduces nicks in the DNA strand. Cleaves the DNA backbone by beta-delta elimination to generate a single-strand break at the site of the removed base with both 3'- and 5'-phosphates. The polypeptide is Endonuclease 8 (Shigella boydii serotype 4 (strain Sb227)).